The primary structure comprises 839 residues: Putative AC9 transposase (839 aa).

Residues 32–43 are compositionally biased toward polar residues; that stretch reads SSSNANGTATDP. Residues 32–85 are disordered; it reads SSSNANGTATDPSQDDMAIVHEPQPQPQPQPEPQPQPQPEPEEEAPQKRAKKCT. Pro residues predominate over residues 55–70; sequence QPQPQPQPEPQPQPQP.

This is Putative AC9 transposase from Zea mays (Maize).